Here is a 376-residue protein sequence, read N- to C-terminus: DNA methyltransferase CcrM (376 aa).

Residues 273-370 (KATLSVMTGK…IDELRSVIRN (98 aa)) form the RAMA domain.

This sequence belongs to the N(4)/N(6)-methyltransferase family.

The catalysed reaction is a 2'-deoxyadenosine in DNA + S-adenosyl-L-methionine = an N(6)-methyl-2'-deoxyadenosine in DNA + S-adenosyl-L-homocysteine + H(+). Its function is as follows. A beta subtype methylase that recognizes the double-stranded sequence 5'-GANTC-3' and methylates A-2 on both strands. Overexpression leads to many branched and bloated cells, two to three times the size of wild-type cells, and cells that have 1-3 times the normal amount of DNA. Contributes to the accurate cell-cycle control of DNA replication and cellular morphology. Can fully replace its ortholog in C.crescentus. The sequence is that of DNA methyltransferase CcrM (smeIM) from Rhizobium meliloti (strain 1021) (Ensifer meliloti).